The sequence spans 182 residues: Isopentenyl-diphosphate Delta-isomerase (182 aa).

The Mn(2+) site is built by His-25 and His-32. Residues 30–164 (LLHLAFSSWL…PWAFSPWMVM (135 aa)) enclose the Nudix hydrolase domain. Cys-67 is an active-site residue. His-69 serves as a coordination point for Mn(2+). Glu-87 provides a ligand contact to Mg(2+). 2 residues coordinate Mn(2+): Glu-114 and Glu-116. The active site involves Glu-116.

This sequence belongs to the IPP isomerase type 1 family. Homodimer. Requires Mg(2+) as cofactor. The cofactor is Mn(2+).

It localises to the cytoplasm. It carries out the reaction isopentenyl diphosphate = dimethylallyl diphosphate. Its pathway is isoprenoid biosynthesis; dimethylallyl diphosphate biosynthesis; dimethylallyl diphosphate from isopentenyl diphosphate: step 1/1. In terms of biological role, catalyzes the 1,3-allylic rearrangement of the homoallylic substrate isopentenyl (IPP) to its highly electrophilic allylic isomer, dimethylallyl diphosphate (DMAPP). The polypeptide is Isopentenyl-diphosphate Delta-isomerase (Escherichia coli O7:K1 (strain IAI39 / ExPEC)).